We begin with the raw amino-acid sequence, 210 residues long: Probable glutathione peroxidase 8 (210 aa).

The chain crosses the membrane as a helical span at residues 21–40 (VLLSMTVGVGCLLLLQTQLL).

The protein belongs to the glutathione peroxidase family.

The protein resides in the membrane. The catalysed reaction is 2 glutathione + H2O2 = glutathione disulfide + 2 H2O. This Tetraodon nigroviridis (Spotted green pufferfish) protein is Probable glutathione peroxidase 8 (gpx8).